The chain runs to 212 residues: Large ribosomal subunit protein uL3 (212 aa).

An N5-methylglutamine modification is found at glutamine 153.

The protein belongs to the universal ribosomal protein uL3 family. In terms of assembly, part of the 50S ribosomal subunit. Forms a cluster with proteins L14 and L19. Post-translationally, methylated by PrmB.

Functionally, one of the primary rRNA binding proteins, it binds directly near the 3'-end of the 23S rRNA, where it nucleates assembly of the 50S subunit. The polypeptide is Large ribosomal subunit protein uL3 (Shewanella loihica (strain ATCC BAA-1088 / PV-4)).